A 216-amino-acid chain; its full sequence is LHFPL tetraspan subfamily member 3 protein (216 aa).

Transmembrane regions (helical) follow at residues 22–42, 96–116, 126–146, and 177–197; these read IGVLWAIFTTLFAIVNVVCFV, FFIGMSMVLVLSCIGCFALFF, ICGWMQLAAGTCLVLGCMIYP, and ILAIMGILDALILSFLAFVLG.

Belongs to the LHFP family.

The protein localises to the membrane. This is LHFPL tetraspan subfamily member 3 protein from Danio rerio (Zebrafish).